Reading from the N-terminus, the 126-residue chain is NADP-reducing hydrogenase subunit HndB (126 aa).

In terms of assembly, heterotetramer composed of HndA, HndB, HndC and HndD subunits. HndA and HndB could form a heterodimeric intermediate in the electron transfer between the active site of hydrogenase subunit HndD and the NADP reduction site of the reducing subunit HndC.

The enzyme catalyses H2 + NADP(+) = NADPH + H(+). Its activity is regulated as follows. Inhibited by oxygen. Functionally, catalyzes the reduction of NADP in the presence of molecular H2 to yield NADPH. This chain is NADP-reducing hydrogenase subunit HndB (hndB), found in Solidesulfovibrio fructosivorans (Desulfovibrio fructosivorans).